The primary structure comprises 358 residues: Membrane-bound lytic murein transglycosylase C (358 aa).

The first 16 residues, M1–S16, serve as a signal peptide directing secretion. C17 carries the N-palmitoyl cysteine lipid modification. C17 carries the S-diacylglycerol cysteine lipid modification.

This sequence belongs to the transglycosylase Slt family.

It is found in the cell outer membrane. It catalyses the reaction Exolytic cleavage of the (1-&gt;4)-beta-glycosidic linkage between N-acetylmuramic acid (MurNAc) and N-acetylglucosamine (GlcNAc) residues in peptidoglycan, from either the reducing or the non-reducing ends of the peptidoglycan chains, with concomitant formation of a 1,6-anhydrobond in the MurNAc residue.. In terms of biological role, murein-degrading enzyme. May play a role in recycling of muropeptides during cell elongation and/or cell division. The chain is Membrane-bound lytic murein transglycosylase C from Serratia proteamaculans (strain 568).